Consider the following 314-residue polypeptide: DNA-directed RNA polymerase subunit alpha (314 aa).

The alpha N-terminal domain (alpha-NTD) stretch occupies residues 1–228; the sequence is MIEIEKPRIE…EHLNIFVGLT (228 aa). The tract at residues 246-314 is alpha C-terminal domain (alpha-CTD); sequence EKVLEMSIEE…DLGLGLRKED (69 aa).

This sequence belongs to the RNA polymerase alpha chain family. In terms of assembly, homodimer. The RNAP catalytic core consists of 2 alpha, 1 beta, 1 beta' and 1 omega subunit. When a sigma factor is associated with the core the holoenzyme is formed, which can initiate transcription.

It carries out the reaction RNA(n) + a ribonucleoside 5'-triphosphate = RNA(n+1) + diphosphate. In terms of biological role, DNA-dependent RNA polymerase catalyzes the transcription of DNA into RNA using the four ribonucleoside triphosphates as substrates. The sequence is that of DNA-directed RNA polymerase subunit alpha from Staphylococcus aureus (strain Mu3 / ATCC 700698).